The following is a 501-amino-acid chain: Glutamate--tRNA ligase (501 aa).

The 'HIGH' region motif lies at 11–21; that stretch reads PSPTGFLHIGN. The 'KMSKS' region signature appears at 257–261; it reads KLSKR. Lys-260 is an ATP binding site.

The protein belongs to the class-I aminoacyl-tRNA synthetase family. Glutamate--tRNA ligase type 1 subfamily. As to quaternary structure, monomer.

It is found in the cytoplasm. The catalysed reaction is tRNA(Glu) + L-glutamate + ATP = L-glutamyl-tRNA(Glu) + AMP + diphosphate. Catalyzes the attachment of glutamate to tRNA(Glu) in a two-step reaction: glutamate is first activated by ATP to form Glu-AMP and then transferred to the acceptor end of tRNA(Glu). In Limosilactobacillus reuteri subsp. reuteri (strain JCM 1112) (Lactobacillus reuteri), this protein is Glutamate--tRNA ligase.